Here is a 137-residue protein sequence, read N- to C-terminus: Small ribosomal subunit protein uS12 (137 aa).

The tract at residues 1–26 (MPTINQLVTKGRKRKASKTKSPALNQ) is disordered.

This sequence belongs to the universal ribosomal protein uS12 family. In terms of assembly, part of the 30S ribosomal subunit. Contacts proteins S8 and S17. May interact with IF1 in the 30S initiation complex.

In terms of biological role, with S4 and S5 plays an important role in translational accuracy. Interacts with and stabilizes bases of the 16S rRNA that are involved in tRNA selection in the A site and with the mRNA backbone. Located at the interface of the 30S and 50S subunits, it traverses the body of the 30S subunit contacting proteins on the other side and probably holding the rRNA structure together. The combined cluster of proteins S8, S12 and S17 appears to hold together the shoulder and platform of the 30S subunit. The protein is Small ribosomal subunit protein uS12 of Mycoplasmopsis pulmonis (strain UAB CTIP) (Mycoplasma pulmonis).